We begin with the raw amino-acid sequence, 954 residues long: Glycine dehydrogenase (decarboxylating) (954 aa).

Lys-704 is modified (N6-(pyridoxal phosphate)lysine).

It belongs to the GcvP family. In terms of assembly, the glycine cleavage system is composed of four proteins: P, T, L and H. Pyridoxal 5'-phosphate serves as cofactor.

The enzyme catalyses N(6)-[(R)-lipoyl]-L-lysyl-[glycine-cleavage complex H protein] + glycine + H(+) = N(6)-[(R)-S(8)-aminomethyldihydrolipoyl]-L-lysyl-[glycine-cleavage complex H protein] + CO2. The glycine cleavage system catalyzes the degradation of glycine. The P protein binds the alpha-amino group of glycine through its pyridoxal phosphate cofactor; CO(2) is released and the remaining methylamine moiety is then transferred to the lipoamide cofactor of the H protein. The chain is Glycine dehydrogenase (decarboxylating) from Sinorhizobium medicae (strain WSM419) (Ensifer medicae).